Consider the following 157-residue polypeptide: 2-C-methyl-D-erythritol 2,4-cyclodiphosphate synthase (157 aa).

2 residues coordinate a divalent metal cation: Asp-9 and His-11. 4-CDP-2-C-methyl-D-erythritol 2-phosphate contacts are provided by residues 9 to 11 and 35 to 36; these read DVH and HS. His-43 is a binding site for a divalent metal cation. Residues 57–59, Phe-140, and Arg-143 contribute to the 4-CDP-2-C-methyl-D-erythritol 2-phosphate site; that span reads DIG.

Belongs to the IspF family. In terms of assembly, homotrimer. It depends on a divalent metal cation as a cofactor.

The catalysed reaction is 4-CDP-2-C-methyl-D-erythritol 2-phosphate = 2-C-methyl-D-erythritol 2,4-cyclic diphosphate + CMP. It functions in the pathway isoprenoid biosynthesis; isopentenyl diphosphate biosynthesis via DXP pathway; isopentenyl diphosphate from 1-deoxy-D-xylulose 5-phosphate: step 4/6. In terms of biological role, involved in the biosynthesis of isopentenyl diphosphate (IPP) and dimethylallyl diphosphate (DMAPP), two major building blocks of isoprenoid compounds. Catalyzes the conversion of 4-diphosphocytidyl-2-C-methyl-D-erythritol 2-phosphate (CDP-ME2P) to 2-C-methyl-D-erythritol 2,4-cyclodiphosphate (ME-CPP) with a corresponding release of cytidine 5-monophosphate (CMP). In Caldicellulosiruptor bescii (strain ATCC BAA-1888 / DSM 6725 / KCTC 15123 / Z-1320) (Anaerocellum thermophilum), this protein is 2-C-methyl-D-erythritol 2,4-cyclodiphosphate synthase.